We begin with the raw amino-acid sequence, 100 residues long: Replication restart protein PriB (100 aa).

Positions 1–99 (MGFNNLVSLA…LRIQNIKEYK (99 aa)) constitute an SSB domain.

This sequence belongs to the PriB family. As to quaternary structure, homodimer. Interacts with PriA and DnaT. Component of the replication restart primosome. Primosome assembly occurs via a 'hand-off' mechanism. PriA binds to replication forks, subsequently PriB then DnaT bind; DnaT then displaces ssDNA to generate the helicase loading substrate.

Functionally, involved in the restart of stalled replication forks, which reloads the replicative helicase on sites other than the origin of replication; the PriA-PriB pathway is the major replication restart pathway. During primosome assembly it facilitates complex formation between PriA and DnaT on DNA; stabilizes PriA on DNA. Stimulates the DNA unwinding activity of PriA helicase. This Neisseria meningitidis serogroup C (strain 053442) protein is Replication restart protein PriB.